Reading from the N-terminus, the 122-residue chain is Large ribosomal subunit protein uL14 (122 aa).

It belongs to the universal ribosomal protein uL14 family. In terms of assembly, part of the 50S ribosomal subunit. Forms a cluster with proteins L3 and L19. In the 70S ribosome, L14 and L19 interact and together make contacts with the 16S rRNA in bridges B5 and B8.

In terms of biological role, binds to 23S rRNA. Forms part of two intersubunit bridges in the 70S ribosome. The polypeptide is Large ribosomal subunit protein uL14 (Pseudothermotoga lettingae (strain ATCC BAA-301 / DSM 14385 / NBRC 107922 / TMO) (Thermotoga lettingae)).